We begin with the raw amino-acid sequence, 92 residues long: Putative defensin-like protein 251 (92 aa).

The signal sequence occupies residues 1–27 (MRCVTSFVVFCILMFFVLNIFTVEVKA). 4 cysteine pairs are disulfide-bonded: cysteine 34–cysteine 90, cysteine 45–cysteine 69, cysteine 53–cysteine 82, and cysteine 67–cysteine 84.

It belongs to the DEFL family.

Its subcellular location is the secreted. This chain is Putative defensin-like protein 251 (SCRL12), found in Arabidopsis thaliana (Mouse-ear cress).